The chain runs to 221 residues: ATP-dependent dethiobiotin synthetase BioD (221 aa).

An ATP-binding site is contributed by 11–16 (DIGKTL). Residue Thr15 coordinates Mg(2+). The active site involves Lys35. Thr39 is a binding site for substrate. ATP contacts are provided by residues Asp44 and 103 to 106 (EGAG). Asp44 and Glu103 together coordinate Mg(2+).

The protein belongs to the dethiobiotin synthetase family. In terms of assembly, homodimer. Requires Mg(2+) as cofactor.

It localises to the cytoplasm. The catalysed reaction is (7R,8S)-7,8-diammoniononanoate + CO2 + ATP = (4R,5S)-dethiobiotin + ADP + phosphate + 3 H(+). The protein operates within cofactor biosynthesis; biotin biosynthesis; biotin from 7,8-diaminononanoate: step 1/2. Its function is as follows. Catalyzes a mechanistically unusual reaction, the ATP-dependent insertion of CO2 between the N7 and N8 nitrogen atoms of 7,8-diaminopelargonic acid (DAPA, also called 7,8-diammoniononanoate) to form a ureido ring. This Leptospira borgpetersenii serovar Hardjo-bovis (strain L550) protein is ATP-dependent dethiobiotin synthetase BioD.